The following is a 317-amino-acid chain: Bile salt hydrolase/transferase (317 aa).

Cysteine 2 acts as the Nucleophile; acyl-thioester intermediate in catalysis. Deoxycholate is bound by residues cysteine 2 and arginine 18. Taurine is bound at residue asparagine 82.

This sequence belongs to the peptidase C59 family. In terms of assembly, homotetramer. The tetramer consists of a dimer of dimers.

The enzyme catalyses glycocholate + H2O = cholate + glycine. It carries out the reaction glycodeoxycholate + H2O = deoxycholate + glycine. The catalysed reaction is chenodeoxycholate + glycine = glycochenodeoxycholate + H2O. It catalyses the reaction cholate + taurine = taurocholate + H2O. The enzyme catalyses taurodeoxycholate + H2O = deoxycholate + taurine. It carries out the reaction taurochenodeoxycholate + H2O = chenodeoxycholate + taurine. The catalysed reaction is an L-alpha-amino acid + cholate = an N-choloyl-L-alpha-amino acid + H2O. It catalyses the reaction an L-alpha-amino acid + taurocholate = an N-choloyl-L-alpha-amino acid + taurine. The enzyme catalyses cholate + L-alanine = L-alanocholate + H2O. It carries out the reaction taurocholate + L-alanine = L-alanocholate + taurine. The catalysed reaction is cholate + L-serine = L-serocholate + H2O. It catalyses the reaction taurocholate + L-serine = L-serocholate + taurine. The enzyme catalyses cholate + L-histidine = L-histidocholate + H2O. It carries out the reaction taurocholate + L-histidine = L-histidocholate + taurine. Its pathway is lipid metabolism; bile acid biosynthesis. Functionally, possesses dual functions in bile acid metabolism. Acts as a bile salt hydrolase that catalyzes the deconjugation of glycine- and taurine-linked bile salts, which occurs naturally in the intestines of humans, releasing amino acid residues and deconjugated bile salts (bile acids). Can hydrolyze the amide bond in all six major human conjugated bile salts, namely glycocholate (GCA), glycodeoxycholate (GDCA), glycochenodeoxycholate (GCDCA), taurocholate (TCA), taurodeoxycholate (TDCA) and taurochenodeoxycholate (TCDCA). Shows a slight preference for glycine-conjugated bile acids as substrates. Also acts as an amine N-acyltransferase that conjugates a wide variety of amino acids to conjugated and non-conjugated bile acids, thus producing bacterial bile acid amidates (BBAAs) - also named microbially conjugated bile acids (MCBAs) - in the gastrointestinal tract. These BBAAs may facilitate communication between the microbiota and host through the activation of human ligand-activated transcription factors. The chain is Bile salt hydrolase/transferase from Bifidobacterium longum subsp. longum (strain ATCC 15707 / DSM 20219 / JCM 1217 / NCTC 11818 / E194b).